Consider the following 285-residue polypeptide: Diaminopimelate epimerase (285 aa).

Residues Asn11 and Asn62 each coordinate substrate. The Proton donor role is filled by Cys71. Substrate contacts are provided by residues 72–73 (GN), Asn167, Asn200, and 218–219 (ER). Cys227 functions as the Proton acceptor in the catalytic mechanism. Position 228-229 (228-229 (GT)) interacts with substrate.

The protein belongs to the diaminopimelate epimerase family. Homodimer.

Its subcellular location is the cytoplasm. The enzyme catalyses (2S,6S)-2,6-diaminopimelate = meso-2,6-diaminopimelate. It functions in the pathway amino-acid biosynthesis; L-lysine biosynthesis via DAP pathway; DL-2,6-diaminopimelate from LL-2,6-diaminopimelate: step 1/1. Catalyzes the stereoinversion of LL-2,6-diaminopimelate (L,L-DAP) to meso-diaminopimelate (meso-DAP), a precursor of L-lysine and an essential component of the bacterial peptidoglycan. This chain is Diaminopimelate epimerase, found in Agathobacter rectalis (strain ATCC 33656 / DSM 3377 / JCM 17463 / KCTC 5835 / VPI 0990) (Eubacterium rectale).